The sequence spans 398 residues: MLGRSGYRALPLGDFDRFQQSSFGFLGSQKGCLSPERGGVGTGADVPQSWPSCLCHGLISFLGFLLLLVTFPISGWFALKIVPTYERMIVFRLGRIRTPQGPGMVLLLPFIDSFQRVDLRTRAFNVPPCKLASKDGAVLSVGADVQFRIWDPVLSVMTVKDLNTATRMTAQNAMTKALLKRPLREIQMEKLKISDQLLLEINDVTRAWGLEVDRVELAVEAVLQPPQDSPAGPNLDSTLQQLALHFLGGSMNSMAGGAPSPGPADTVEMVSEVEPPAPQVGARSSPKQPLAEGLLTALQPFLSEALVSQVGACYQFNVVLPSGTQSAYFLDLTTGRGRVGHGVPDGIPDVVVEMAEADLRALLCRELRPLGAYMSGRLKVKGDLAMAMKLEAVLRALK.

The Tyrosine-type lysosomal sorting signal motif lies at 6–10 (GYRAL). Phosphoserine is present on S28. A helical; Signal-anchor for type III membrane protein membrane pass occupies residues 58 to 78 (LISFLGFLLLLVTFPISGWFA). The Cytoplasmic segment spans residues 79–398 (LKIVPTYERM…KLEAVLRALK (320 aa)). In terms of domain architecture, SCP2 spans 287–398 (KQPLAEGLLT…KLEAVLRALK (112 aa)).

Belongs to the band 7/mec-2 family. In terms of assembly, interacts with STOM; may redistribute STOM from the plasma membrane to late endosomes. Interacts with FBXW7 isoform 3 and CDK2. As to expression, ubiquitously expressed at low levels. Expression is highest in brain.

The protein localises to the membrane. Its subcellular location is the late endosome membrane. It localises to the membrane raft. The protein resides in the cell membrane. It is found in the cytoplasmic vesicle. May play a role in cholesterol transfer to late endosomes. May play a role in modulating membrane acid-sensing ion channels. Can specifically inhibit proton-gated current of ASIC1 isoform 1. Can increase inactivation speed of ASIC3. May be involved in regulation of proton sensing in dorsal root ganglions. May play a role in protecting FBXW7 isoform 3 from degradation. This Homo sapiens (Human) protein is Stomatin-like protein 1 (STOML1).